Here is a 182-residue protein sequence, read N- to C-terminus: Bifunctional protein PyrR (182 aa).

The PRPP-binding signature appears at 100 to 112; that stretch reads VVLVDDVLYTGRT.

The protein belongs to the purine/pyrimidine phosphoribosyltransferase family. PyrR subfamily. In terms of assembly, homodimer and homohexamer; in equilibrium.

It catalyses the reaction UMP + diphosphate = 5-phospho-alpha-D-ribose 1-diphosphate + uracil. In terms of biological role, regulates transcriptional attenuation of the pyrimidine nucleotide (pyr) operon by binding in a uridine-dependent manner to specific sites on pyr mRNA. This disrupts an antiterminator hairpin in the RNA and favors formation of a downstream transcription terminator, leading to a reduced expression of downstream genes. Also displays a weak uracil phosphoribosyltransferase activity which is not physiologically significant. The polypeptide is Bifunctional protein PyrR (Natranaerobius thermophilus (strain ATCC BAA-1301 / DSM 18059 / JW/NM-WN-LF)).